A 693-amino-acid polypeptide reads, in one-letter code: Polyribonucleotide nucleotidyltransferase (693 aa).

Aspartate 489 and aspartate 495 together coordinate Mg(2+). Residues 556–615 form the KH domain; that stretch reads PQIHVMNINPAKIKDVVGRGGATVKGIVEKTGAQIDTSDSGEVKVFAKDKKSMDMAVAMI. In terms of domain architecture, S1 motif spans 625-693; the sequence is GQVYKGKIVK…GRVKLSLVAR (69 aa).

This sequence belongs to the polyribonucleotide nucleotidyltransferase family. As to quaternary structure, component of the RNA degradosome, which is a multiprotein complex involved in RNA processing and mRNA degradation. Requires Mg(2+) as cofactor.

It localises to the cytoplasm. It carries out the reaction RNA(n+1) + phosphate = RNA(n) + a ribonucleoside 5'-diphosphate. In terms of biological role, involved in mRNA degradation. Catalyzes the phosphorolysis of single-stranded polyribonucleotides processively in the 3'- to 5'-direction. This Francisella tularensis subsp. tularensis (strain WY96-3418) protein is Polyribonucleotide nucleotidyltransferase.